Consider the following 450-residue polypeptide: Protein tweety homolog 1 (450 aa).

The Extracellular portion of the chain corresponds to Met-1–Ala-43. The chain crosses the membrane as a helical span at residues Leu-44–Val-64. The Cytoplasmic portion of the chain corresponds to Tyr-65–Gly-88. The chain crosses the membrane as a helical span at residues Cys-89 to Phe-109. Residues Tyr-110–Trp-214 lie on the Extracellular side of the membrane. Asn-130 and Asn-205 each carry an N-linked (GlcNAc...) asparagine glycan. The chain crosses the membrane as a helical span at residues Leu-215 to Leu-235. Topologically, residues Ala-236–Lys-240 are cytoplasmic. A helical membrane pass occupies residues Trp-241–Met-261. The Extracellular segment spans residues Gly-262–Glu-390. 2 disulfides stabilise this stretch: Cys-275-Cys-385 and Cys-303-Cys-370. N-linked (GlcNAc...) asparagine glycans are attached at residues Asn-284 and Asn-355. A helical transmembrane segment spans residues Gly-391–Cys-411. Residues Ser-412 to Ile-450 lie on the Cytoplasmic side of the membrane. The interval Asp-428 to Ile-450 is disordered. The residue at position 440 (Ser-440) is a Phosphoserine.

It belongs to the tweety family. Homotetramer; disulfide-linked. Homodimer. N-glycosylated. Contains high-mannose, hybrid and complex oligosaccharides. Expressed in brain, eye, ovary and testis, and at lower levels in muscle, placenta, liver and lung.

It localises to the cell membrane. The enzyme catalyses chloride(in) = chloride(out). The catalysed reaction is L-glutamate(out) = L-glutamate(in). Functionally, calcium-independent, swelling-dependent volume-regulated anion channel (VRAC-swell) which plays a pivotal role in the process of regulatory volume decrease (RVD) in the brain through the efflux of anions like chloride and organic osmolytes like glutamate. Its function is as follows. Ca(2+)-independent, swelling-activated chloride channel, possibly involved in regulation of cell volume. This chain is Protein tweety homolog 1 (TTYH1), found in Homo sapiens (Human).